The following is a 208-amino-acid chain: Large ribosomal subunit protein uL3 (208 aa).

Residues 124–146 (HGQSRGPMAHGSRYHRRPGSMGP) are disordered.

The protein belongs to the universal ribosomal protein uL3 family. Part of the 50S ribosomal subunit. Forms a cluster with proteins L14 and L19.

Functionally, one of the primary rRNA binding proteins, it binds directly near the 3'-end of the 23S rRNA, where it nucleates assembly of the 50S subunit. In Streptococcus thermophilus (strain ATCC BAA-491 / LMD-9), this protein is Large ribosomal subunit protein uL3.